Consider the following 194-residue polypeptide: Calcium channel flower (194 aa).

Topologically, residues 1 to 34 (MSFAEKITGLLARPNQQDPIGPEQPWYLKYGSRL) are cytoplasmic. The helical transmembrane segment at 35–55 (LGIVAAFFAILFGLWNVFSII) threads the bilayer. Residues 56-65 (TLSVSCLVAG) are Extracellular-facing. A helical transmembrane segment spans residues 66–88 (ILQMVAGFVVMLLEAPCCFVCFG). Topologically, residues 89 to 106 (QVNEIAEKVESKPLYFRA) are cytoplasmic. Residues 107–127 (GLYIAMAIPPIILCFGLASLF) form a helical membrane-spanning segment. Residues 128-194 (GSGLIFGTGV…TGAVGTDSNV (67 aa)) lie on the Extracellular side of the membrane. Important for promoting apoptosis stretches follow at residues 135 to 157 (TGVVYGMMALGKKASAEDMRAAA) and 135 to 192 (TGVV…GTDS).

This sequence belongs to the calcium channel flower family. In terms of assembly, associates with the dally/ magu complex. As to quaternary structure, homomultimer. Associates with the dally/ magu complex. In terms of tissue distribution, detected in the imaginal wing disk (at protein level). Detected throughout the adult brain, including the optic lobe but, at much lower levels of expression than isoform Lose-A. As to expression, detected in the optic lobe (at protein level). Detected throughout the adult brain, including the optic lobe. Expressed in damaged and undamaged optic lobe neurons. In terms of tissue distribution, expressed in optic lobe neurons, with higher levels of expression in suboptimal neurons. Specifically expressed in injury-damaged optic lobe neurons.

The protein resides in the cell membrane. Its subcellular location is the cytoplasmic vesicle. The protein localises to the secretory vesicle. It localises to the synaptic vesicle membrane. It is found in the presynaptic cell membrane. The protein resides in the endosome. Its subcellular location is the synaptic vesicle. Its activity is regulated as follows. Channel activity is inhibited by La(3+), which reduces Ca(2+) influx and thus inhibits it's function in promoting activity-dependent bulk endocytosis (ADBE) in response to high stimuli. Transmembrane protein which mediates synaptic endocytosis, fitness-based cell culling, neuronal culling, morphogen gradient scaling, and calcium transport. Regulates synaptic endocytosis and hence couples exo- with endocytosis. Controls two major modes of synaptic vesicle (SV) endocytosis in the synaptic boutons of neuromuscular junctions (NMJs); Ca(2+) channel-independent Clathrin-mediated endocytosis (CME) in response to mild stimulation, and Ca(2+) channel-dependent activity-dependent bulk endocytosis (ADBE) in response to strong stimulation. Functions in ADBE and subsequent SV reformation from bulk endosomes by initiating Ca(2+) channel-dependent phosphatidylinositol 4,5-bisphosphate (PtdIns(4,5)P2) compartmentalization in synaptic boutons. There it acts at the periactive zone to provide the low Ca(2+) levels required to initiate Calcineurin activation and upregulate PtdIns(4,5)P2. Conversely PtdIns(4,5)P2 enhances fwe Ca(2+) channel-activity, establishing a positive feedback loop that induces PtdIns(4,5)P2 microdomain at the periactive zone. These microdomains trigger bulk membrane invagination (i.e. ADBE) by triggering actin polymerization while also promoting localization of fwe to bulk endosomes, thereby removing the ADBE trigger to reduce endocytosis and prevent excess membrane uptake. PtdIns(4,5)P2 then promotes SV reformation from the bulk endosomes, to coordinate ADBE and subsequent SV reformation. Different combinations of the flower isoforms at the cell membrane are also required for the identification and elimination of suboptimal or supernumerary cells during development, regeneration, and adulthood. Required for the recognition and elimination of unfit cells in the developing wing during cell competition. Also required for efficient identification and elimination of injured, damaged and/or dysfunctional neurons during regeneration of the adult brain. In the developing pupal retina, mediates the elimination of unwanted postmitotic neurons, including supernumerary photoreceptor neurons that form at the periphery of the retina and are contained within incomplete ommatidia units. Downstream of the flower fitness fingerprints, cells identified as unwanted or unfit are eliminated via apoptosis through the expression of ahuizotl (azot). However, the cells marked for elimination by the flower isoforms only undergo apoptosis if additional thresholds are met; (1) their neighboring fit/healthy cells express different levels of the fwe isoforms, and (2) the levels of the protective signal SPARC expressed by the loser or unwanted cells are unable to inhibit caspase activation. These additional thresholds for flower-mediated apoptosis, allows useful cells to recover from transient and limited stress before they are unnecessarily eliminated. Functions with dally and magu in a mechanism of scaling, which utilises apoptosis to ensure that the dpp morphogen gradient, which mediates organ growth, remains proportional to the size of the growing wing. In this mechanism, fwe represses dally- and Magu-dependent activity in expanding the gradient, and dally/Magu inhibits fwe-dependent apoptosis to keep cell death rate low. When the levels of these different proteins are optimally regulated the gradient correctly scales with organ growth but when this fails, fwe-mediated apoptosis is activated to trim the developing tissue to match the correct size of the gradient. Functionally, functions with the other flower isoforms to produce tissue-specific fitness fingerprints that identify unfit or fit cells during cell selection processes in order to maintain tissue health. In the wing imaginal disk, this isoform is highly expressed in healthy/normal cells but is down-regulated in cells with decreased fitness. During cell competition, if levels of this isoform in unfit cells is lower than in the surrounding neighboring cells, the suboptimal cells are recognized as 'loser' cells, and undergo elimination via apoptosis to be replaced by the surrounding healthy 'winner' cell population. Its function is as follows. Functions with the other flower isoforms to produce tissue-specific fitness fingerprints that identify unfit or fit cells during cell selection processes in order to maintain tissue health. In the wing imaginal disk, this isoform displays low levels of expression in healthy/normal cells but is up-regulated in cells with decreased fitness. During cell competition, if levels of this isoform in unfit cells is higher than in the surrounding neighboring cells, the suboptimal cells are recognized as 'loser' cells, and undergo elimination via apoptosis to be replaced by the surrounding healthy 'winner' cell population. In terms of biological role, functions with the other flower isoforms to produce tissue-specific fitness fingerprints that identify unfit cells for cell selection processes during development, regeneration, and to maintain tissue health. During cell competition in certain tissues, marks suboptimal or damaged cells as 'loser' cells. In cells of the wing imaginal disk and damaged or dysfunctional neurons in the adult optic lobe, this isoform displays low to no expression in healthy/normal cells but is up-regulated in cells with decreased fitness or damage-affected neurons. During cell competition, if levels of this isoform in unfit cells is higher than in the surrounding neighboring cells, the suboptimal cells are recognized as 'loser' cells, and undergo elimination via apoptosis to be replaced by the surrounding healthy/undamaged 'winner' cell population. In the developing pupal retina, also required for the recognition and elimination of postmitotic neurons, including supernumerary photoreceptor neurons that form at the periphery of the retina and are contained within incomplete ommatidia units. Activity at the peripheral retina is induced by the wg signaling pathway but, once activated, it promotes apoptosis of supernumerary photoreceptor neurons independently of wg signaling and snail function. The polypeptide is Calcium channel flower (fwe) (Drosophila melanogaster (Fruit fly)).